The following is a 259-amino-acid chain: Complement factor D (259 aa).

An N-terminal signal peptide occupies residues 1-21 (MADRSLHLVVLILLGTALCAA). A propeptide spans 22 to 26 (QPRGR) (activation peptide). The Peptidase S1 domain occupies 27-254 (ILRGQEAPSH…YVAWIDGVMA (228 aa)). A disulfide bridge connects residues Cys52 and Cys68. Active-site charge relay system residues include His67 and Asp115. Disulfide bonds link Cys149-Cys215, Cys180-Cys196, and Cys205-Cys230. Catalysis depends on Ser209, which acts as the Charge relay system. The interval 224 to 228 (TSGSR) is self-inhibitor loop.

Belongs to the peptidase S1 family. CFD is activated by the removal of 5 residues at the N-terminus, named activation peptide, by the MASP-3 isoform of MASP1.

The protein localises to the secreted. It carries out the reaction Selective cleavage of Arg-|-Lys bond in complement factor B when in complex with complement subcomponent C3b or with cobra venom factor.. Its activity is regulated as follows. Circulates in plasma in a mature but self-inhibited form. Activated by factor B (CFB), which displaces the self-inhibition loop. Associates with CFB complexed with complement C3b. Functionally, serine protease that initiates the alternative pathway of the complement system, a cascade of proteins that leads to phagocytosis and breakdown of pathogens and signaling that strengthens the adaptive immune system. In contrast to other complement pathways (classical, lectin and GZMK) that are directly activated by pathogens or antigen-antibody complexes, the alternative complement pathway is initiated by the spontaneous hydrolysis of complement C3. The alternative complement pathway acts as an amplification loop that enhances complement activation by mediating the formation of C3 and C5 convertases. Activated CFD cleaves factor B (CFB) when the latter is complexed with complement C3b, activating the C3 convertase of the alternative pathway. This is Complement factor D (CFD) from Bos taurus (Bovine).